The chain runs to 348 residues: Rhodopsin (348 aa).

Met1 bears the N-acetylmethionine mark. Over 1–36 (MNGTEGPNFYVPFSNKTGVVRSPFEFPQYYLAEPWQ) the chain is Extracellular. Residues Asn2 and Asn15 are each glycosylated (N-linked (GlcNAc...) asparagine). The chain crosses the membrane as a helical span at residues 37–61 (FSMLAAYMFLLIVLGFPINFLTLYV). Topologically, residues 62–73 (TVQHKKLRTPLN) are cytoplasmic. Residues 74 to 96 (YILLNLAVADLFMVFGGFTTTLY) traverse the membrane as a helical segment. Residues 97 to 110 (TSLHGYFVFGPTGC) lie on the Extracellular side of the membrane. Cysteines 110 and 187 form a disulfide. The helical transmembrane segment at 111–133 (NLEGFFATLGGEIALWSLVVLAI) threads the bilayer. The 'Ionic lock' involved in activated form stabilization motif lies at 134 to 136 (ERY). Topologically, residues 134-152 (ERYVVVCKPMSNFRFGENH) are cytoplasmic. Residues 153 to 173 (AIMGVGFTWVMALACAAPPLV) form a helical membrane-spanning segment. The Extracellular segment spans residues 174-202 (GWSRYIPEGMQCSCGIDYYTLKPEVNNES). Glu201 contacts Zn(2+). A helical membrane pass occupies residues 203-224 (FVIYMFVVHFTIPMIVIFFCYG). Residues 225-252 (QLVFTVKEAAAQQQESATTQKAEKEVTR) are Cytoplasmic-facing. The helical transmembrane segment at 253 to 274 (MVIIMVIAFLICWVPYASVAFY) threads the bilayer. Residues 275 to 286 (IFTHQGSNFGPI) lie on the Extracellular side of the membrane. Gln279 is a Zn(2+) binding site. The chain crosses the membrane as a helical span at residues 287-308 (FMTLPAFFAKAASIYNPVIYIM). Lys296 carries the post-translational modification N6-(retinylidene)lysine. The Cytoplasmic segment spans residues 309–348 (MNKQFRTCMITTLCCGKNPLGDDEVSASASKTETSQVAPA). S-palmitoyl cysteine attachment occurs at residues Cys322 and Cys323. The tract at residues 330–348 (DDEVSASASKTETSQVAPA) is interaction with SAG. Ser334 and Ser338 each carry phosphoserine. Phosphothreonine occurs at positions 340 and 342. Residue Ser343 is modified to Phosphoserine.

Belongs to the G-protein coupled receptor 1 family. Opsin subfamily. In terms of assembly, homodimer. May form a complex composed of RHO, GRK1 and RCVRN in a Ca(2+)-dependent manner; RCVRN prevents the interaction between GRK1 and RHO. Interacts with GRK1. Interacts (phosphorylated form) with SAG. Interacts with GNAT1. Interacts with GNAT3. SAG and G-proteins compete for a common binding site. Interacts with PRCD; the interaction promotes PRCD stability. Forms a complex with ASAP1 and ARF4. Forms a complex with ASAP1, RAB11A, Rabin8/RAB3IP, ARF4 and RAB11FIP3; the complex regulates Golgi-to-cilia rhodopsin/RHO transport in photoreceptors. In terms of processing, phosphorylated on some or all of the serine and threonine residues present in the C-terminal region. Post-translationally, contains one covalently linked retinal chromophore. Upon light absorption, the covalently bound 11-cis-retinal is converted to all-trans-retinal. After hydrolysis of the Schiff base and release of the covalently bound all-trans-retinal, active rhodopsin is regenerated by binding of a fresh molecule of 11-cis-retinal.

It is found in the membrane. The protein resides in the cell projection. Its subcellular location is the cilium. The protein localises to the photoreceptor outer segment. In terms of biological role, photoreceptor required for image-forming vision at low light intensity. Required for photoreceptor cell viability after birth. Light-induced isomerization of 11-cis to all-trans retinal triggers a conformational change that activates signaling via G-proteins. Subsequent receptor phosphorylation mediates displacement of the bound G-protein alpha subunit by the arrestin SAG and terminates signaling. This Phoca vitulina (Harbor seal) protein is Rhodopsin (RHO).